The chain runs to 217 residues: 3,4-dihydroxy-2-butanone 4-phosphate synthase (217 aa).

Residues 37–38 (RE), Asp42, 150–154 (RRGHT), and Glu174 contribute to the D-ribulose 5-phosphate site. Glu38 serves as a coordination point for Mg(2+). His153 contributes to the Mg(2+) binding site.

It belongs to the DHBP synthase family. In terms of assembly, homodimer. Requires Mg(2+) as cofactor. It depends on Mn(2+) as a cofactor.

It carries out the reaction D-ribulose 5-phosphate = (2S)-2-hydroxy-3-oxobutyl phosphate + formate + H(+). The protein operates within cofactor biosynthesis; riboflavin biosynthesis; 2-hydroxy-3-oxobutyl phosphate from D-ribulose 5-phosphate: step 1/1. Functionally, catalyzes the conversion of D-ribulose 5-phosphate to formate and 3,4-dihydroxy-2-butanone 4-phosphate. The protein is 3,4-dihydroxy-2-butanone 4-phosphate synthase of Shewanella sp. (strain W3-18-1).